The primary structure comprises 192 residues: Large ribosomal subunit protein uL18 (192 aa).

The protein belongs to the universal ribosomal protein uL18 family. In terms of assembly, part of the 50S ribosomal subunit. Contacts the 5S and 23S rRNAs.

This is one of the proteins that bind and probably mediate the attachment of the 5S RNA into the large ribosomal subunit, where it forms part of the central protuberance. The polypeptide is Large ribosomal subunit protein uL18 (Methanothermobacter thermautotrophicus (strain ATCC 29096 / DSM 1053 / JCM 10044 / NBRC 100330 / Delta H) (Methanobacterium thermoautotrophicum)).